A 459-amino-acid chain; its full sequence is Vanillin aminotransferase (459 aa).

Residues 115–116 (GS) and Asp-255 contribute to the pyridoxal 5'-phosphate site. At Lys-284 the chain carries N6-(pyridoxal phosphate)lysine. 320-321 (FT) contacts pyridoxal 5'-phosphate. Residues 428–459 (LSLEELDELIRIYGKALKDTEKRVEELKSQKK) are a coiled coil.

This sequence belongs to the class-III pyridoxal-phosphate-dependent aminotransferase family. As to expression, expressed in placental tissue of immature fruit.

It carries out the reaction vanillin + L-alanine = vanillylamine + pyruvate. Functionally, involved in the biosynthesis of capsaicinoids natural products, pungent alkaloids synthesized from phenylpropanoid intermediates in the placental tissue of chili pepper fruit acting as repellant on herbivorous mammals and conferring spiciness to hot peppers. Can transfer an amine from alanine to vanillin, forming vanillylamine and pyruvate. This is Vanillin aminotransferase from Capsicum frutescens (Cayenne pepper).